The chain runs to 527 residues: Methane monooxygenase component A alpha chain (527 aa).

Residues E114, E144, and H147 each coordinate Fe cation. Residue C151 is part of the active site. Fe cation is bound by residues E209, E243, and H246.

The protein belongs to the TmoA/XamoA family. In terms of assembly, m.capsulatus has two forms of methane monooxygenase, a soluble and a membrane-bound type. The soluble type consists of four components (A to D): protein A, comprising three chains, in an alpha-2, beta-2, gamma-2 configuration, is a nonheme iron protein containing an unusual mu-hydroxo bridge structure at its active site and interacts with both oxygen and methane. The cofactor is Fe cation.

It carries out the reaction methane + NADH + O2 + H(+) = methanol + NAD(+) + H2O. The enzyme catalyses methane + NADPH + O2 + H(+) = methanol + NADP(+) + H2O. In terms of biological role, responsible for the initial oxygenation of methane to methanol in methanotrophs. It also catalyzes the monohydroxylation of a variety of unactivated alkenes, alicyclic, aromatic and heterocyclic compounds. The chain is Methane monooxygenase component A alpha chain (mmoX) from Methylococcus capsulatus (strain ATCC 33009 / NCIMB 11132 / Bath).